A 687-amino-acid chain; its full sequence is Probable WRKY transcription factor 2 (687 aa).

A disordered region spans residues 197–276 (YGNYNNRSSS…AGGAPAEDGY (80 aa)). 2 stretches are compositionally biased toward polar residues: residues 199-208 (NYNNRSSSHQ) and 219-249 (NIES…TSLE). Residues 267-331 (AGGAPAEDGY…YKGAHNHLKP (65 aa)) constitute a DNA-binding region (WRKY 1). 4 residues coordinate Zn(2+): C298, C303, H326, and H328. Disordered stretches follow at residues 324–384 (GAHN…STRF) and 416–453 (FSND…ESKR). Positions 354–379 (RDSAATWVSCNNTQQQGGSNENNVEE) are enriched in polar residues. Over residues 435–444 (YDGGGGGGGG) the composition is skewed to gly residues. Positions 481-546 (SDVDILDDGY…YEGKHNHDVP (66 aa)) form a DNA-binding region, WRKY 2. C512, C517, H541, and H543 together coordinate Zn(2+). The tract at residues 537–599 (YEGKHNHDVP…QVTTNNQSPF (63 aa)) is disordered. Residues 553–565 (HGGGGDSGNGNSG) are compositionally biased toward gly residues. Residues 578–589 (HHSEPPRGRFDR) show a composition bias toward basic and acidic residues. Residues 590–599 (QVTTNNQSPF) show a composition bias toward polar residues.

The protein belongs to the WRKY group I family. As to expression, low expression in senescent leaves. Expressed in both the unfertilized egg cell and the pollen tube.

It is found in the nucleus. Its function is as follows. Transcription factor. Regulates WOX8 and WOX9 expression and basal cell division patterns during early embryogenesis. Interacts specifically with the W box (5'-(T)TGAC[CT]-3'), a frequently occurring elicitor-responsive cis-acting element. Required to repolarize the zygote from a transient symmetric state. This is Probable WRKY transcription factor 2 from Arabidopsis thaliana (Mouse-ear cress).